A 273-amino-acid polypeptide reads, in one-letter code: MHDAQIRVAIAGAGGRMGRQLIQAALQMEGVALGAALEREGSSLVGSDAGELAGAGKAGVAVQSSLTAVKDDFDVLIDFTRPEGTLNHLAFCREHGKGMVIGTTGFDDAGKQAIRDAAQEIAIVFAANFSVGVNVLLKLLEKAAKVMGDYTDIEIIEAHHRHKVDAPSGTALAMGEAIAGALNKDLKECAVYSREGHTGERVPGTIGFATVRAGDIVGEHTAMFADIGERIEITHKASSRMTFANGAVRSALWLKDKKNGLFDMRDVLDLNSL.

NAD(+) contacts are provided by residues 12-17 (GAGGRM) and Glu-38. Arg-39 is an NADP(+) binding site. NAD(+) is bound by residues 102–104 (GTT) and 126–129 (AANF). His-159 (proton donor/acceptor) is an active-site residue. His-160 contacts (S)-2,3,4,5-tetrahydrodipicolinate. Lys-163 serves as the catalytic Proton donor. (S)-2,3,4,5-tetrahydrodipicolinate is bound at residue 169 to 170 (GT).

It belongs to the DapB family. As to quaternary structure, homotetramer.

It is found in the cytoplasm. It catalyses the reaction (S)-2,3,4,5-tetrahydrodipicolinate + NAD(+) + H2O = (2S,4S)-4-hydroxy-2,3,4,5-tetrahydrodipicolinate + NADH + H(+). The enzyme catalyses (S)-2,3,4,5-tetrahydrodipicolinate + NADP(+) + H2O = (2S,4S)-4-hydroxy-2,3,4,5-tetrahydrodipicolinate + NADPH + H(+). It participates in amino-acid biosynthesis; L-lysine biosynthesis via DAP pathway; (S)-tetrahydrodipicolinate from L-aspartate: step 4/4. Its function is as follows. Catalyzes the conversion of 4-hydroxy-tetrahydrodipicolinate (HTPA) to tetrahydrodipicolinate. The protein is 4-hydroxy-tetrahydrodipicolinate reductase of Klebsiella pneumoniae (strain 342).